The primary structure comprises 69 residues: Sec-independent protein translocase protein TatA (69 aa).

Residues 1–21 form a helical membrane-spanning segment; the sequence is MFPKLGMGELVVILLIVVILF. Residues 43–69 form a disordered region; that stretch reads SFSGEDEEKPSTPGATSSDEASKAKQA.

Belongs to the TatA/E family. As to quaternary structure, the Tat system comprises two distinct complexes: a TatABC complex, containing multiple copies of TatA, TatB and TatC subunits, and a separate TatA complex, containing only TatA subunits. Substrates initially bind to the TatABC complex, which probably triggers association of the separate TatA complex to form the active translocon.

It localises to the cell inner membrane. In terms of biological role, part of the twin-arginine translocation (Tat) system that transports large folded proteins containing a characteristic twin-arginine motif in their signal peptide across membranes. TatA could form the protein-conducting channel of the Tat system. The chain is Sec-independent protein translocase protein TatA from Anaeromyxobacter sp. (strain Fw109-5).